The following is a 334-amino-acid chain: S-adenosylmethionine:tRNA ribosyltransferase-isomerase (334 aa).

This sequence belongs to the QueA family. As to quaternary structure, monomer.

The protein localises to the cytoplasm. The enzyme catalyses 7-aminomethyl-7-carbaguanosine(34) in tRNA + S-adenosyl-L-methionine = epoxyqueuosine(34) in tRNA + adenine + L-methionine + 2 H(+). It functions in the pathway tRNA modification; tRNA-queuosine biosynthesis. Functionally, transfers and isomerizes the ribose moiety from AdoMet to the 7-aminomethyl group of 7-deazaguanine (preQ1-tRNA) to give epoxyqueuosine (oQ-tRNA). The polypeptide is S-adenosylmethionine:tRNA ribosyltransferase-isomerase (Rubrobacter xylanophilus (strain DSM 9941 / JCM 11954 / NBRC 16129 / PRD-1)).